A 1221-amino-acid polypeptide reads, in one-letter code: DNA-directed RNA polymerase subunit beta (1221 aa).

Residues 1176–1221 (EKKKLAEEEAEIAAEAEAEGSAEEDAAEADADANEAETADDDKASK) are disordered. Positions 1183 to 1215 (EEAEIAAEAEAEGSAEEDAAEADADANEAETAD) are enriched in acidic residues.

The protein belongs to the RNA polymerase beta chain family. In terms of assembly, the RNAP catalytic core consists of 2 alpha, 1 beta, 1 beta' and 1 omega subunit. When a sigma factor is associated with the core the holoenzyme is formed, which can initiate transcription.

The catalysed reaction is RNA(n) + a ribonucleoside 5'-triphosphate = RNA(n+1) + diphosphate. DNA-dependent RNA polymerase catalyzes the transcription of DNA into RNA using the four ribonucleoside triphosphates as substrates. This Lactobacillus delbrueckii subsp. bulgaricus (strain ATCC BAA-365 / Lb-18) protein is DNA-directed RNA polymerase subunit beta.